The sequence spans 83 residues: MSAKNNIQDQLLNTARKEKIDLTIYLLNGVPLKGKVVSFDNFTIILENENKQNLVYKHAISTIIPAKPIKLHSEETPKEAGGV.

The 61-residue stretch at 9–69 (DQLLNTARKE…ISTIIPAKPI (61 aa)) folds into the Sm domain.

It belongs to the Hfq family. In terms of assembly, homohexamer.

Functionally, RNA chaperone that binds small regulatory RNA (sRNAs) and mRNAs to facilitate mRNA translational regulation in response to envelope stress, environmental stress and changes in metabolite concentrations. Also binds with high specificity to tRNAs. The sequence is that of RNA-binding protein Hfq from Leptospira biflexa serovar Patoc (strain Patoc 1 / Ames).